The sequence spans 83 residues: Exodeoxyribonuclease 7 small subunit (83 aa).

It belongs to the XseB family. As to quaternary structure, heterooligomer composed of large and small subunits.

The protein localises to the cytoplasm. The catalysed reaction is Exonucleolytic cleavage in either 5'- to 3'- or 3'- to 5'-direction to yield nucleoside 5'-phosphates.. Bidirectionally degrades single-stranded DNA into large acid-insoluble oligonucleotides, which are then degraded further into small acid-soluble oligonucleotides. The polypeptide is Exodeoxyribonuclease 7 small subunit (Rhizobium meliloti (strain 1021) (Ensifer meliloti)).